Reading from the N-terminus, the 215-residue chain is Redox-sensing transcriptional repressor Rex 2 (215 aa).

Residues 15–54 (VYLRYLKMLGDSGVKRIKSREFSEMIQIPSATIRRDFSHV) constitute a DNA-binding region (H-T-H motif). NAD(+) is bound at residue 89-94 (GCGNLG).

This sequence belongs to the transcriptional regulatory Rex family. As to quaternary structure, homodimer.

It is found in the cytoplasm. Functionally, modulates transcription in response to changes in cellular NADH/NAD(+) redox state. This chain is Redox-sensing transcriptional repressor Rex 2, found in Enterococcus faecalis (strain ATCC 700802 / V583).